Here is a 461-residue protein sequence, read N- to C-terminus: UPF0210 protein Ddes_0622 (461 aa).

The protein belongs to the UPF0210 family. Homodimer.

In Desulfovibrio desulfuricans (strain ATCC 27774 / DSM 6949 / MB), this protein is UPF0210 protein Ddes_0622.